A 66-amino-acid polypeptide reads, in one-letter code: MASKMKTRKSAKKRYSFTVNGKVKYKKQNLRHILTKKSSKRKRNLRKSGNLSCFEVKRIKTLLPYG.

This sequence belongs to the bacterial ribosomal protein bL35 family.

This chain is Large ribosomal subunit protein bL35, found in Borrelia garinii subsp. bavariensis (strain ATCC BAA-2496 / DSM 23469 / PBi) (Borreliella bavariensis).